A 220-amino-acid polypeptide reads, in one-letter code: Pyridoxine/pyridoxamine 5'-phosphate oxidase (220 aa).

Residues 8-11 (RKSY) and K66 contribute to the substrate site. FMN is bound by residues 61-66 (RVVLIK), 76-77 (FT), R82, and K83. Y123, R127, and S131 together coordinate substrate. Residues 140 to 141 (QS) and W184 contribute to the FMN site. 190-192 (RLH) serves as a coordination point for substrate. R194 lines the FMN pocket.

It belongs to the pyridoxamine 5'-phosphate oxidase family. In terms of assembly, homodimer. It depends on FMN as a cofactor.

It catalyses the reaction pyridoxamine 5'-phosphate + O2 + H2O = pyridoxal 5'-phosphate + H2O2 + NH4(+). The enzyme catalyses pyridoxine 5'-phosphate + O2 = pyridoxal 5'-phosphate + H2O2. It participates in cofactor metabolism; pyridoxal 5'-phosphate salvage; pyridoxal 5'-phosphate from pyridoxamine 5'-phosphate: step 1/1. It functions in the pathway cofactor metabolism; pyridoxal 5'-phosphate salvage; pyridoxal 5'-phosphate from pyridoxine 5'-phosphate: step 1/1. Its function is as follows. Catalyzes the oxidation of either pyridoxine 5'-phosphate (PNP) or pyridoxamine 5'-phosphate (PMP) into pyridoxal 5'-phosphate (PLP). The protein is Pyridoxine/pyridoxamine 5'-phosphate oxidase of Albidiferax ferrireducens (strain ATCC BAA-621 / DSM 15236 / T118) (Rhodoferax ferrireducens).